Reading from the N-terminus, the 901-residue chain is HTH-type transcriptional regulator MalT (901 aa).

39-46 is an ATP binding site; the sequence is SPAGYGKT. Positions 829-894 constitute an HTH luxR-type domain; it reads ELIHTSPLTQ…AAVQHAQKLL (66 aa). The H-T-H motif DNA-binding region spans 853 to 872; the sequence is NEQIAGELEVAATTIKTHIR.

This sequence belongs to the MalT family. As to quaternary structure, monomer in solution. Oligomerizes to an active state in the presence of the positive effectors ATP and maltotriose.

Its activity is regulated as follows. Activated by ATP and maltotriose, which are both required for DNA binding. Functionally, positively regulates the transcription of the maltose regulon whose gene products are responsible for uptake and catabolism of malto-oligosaccharides. Specifically binds to the promoter region of its target genes, recognizing a short DNA motif called the MalT box. This is HTH-type transcriptional regulator MalT from Shigella sonnei (strain Ss046).